Consider the following 79-residue polypeptide: Small serum protein 3 (79 aa).

The N-terminal stretch at 1–19 (MKVFFILIIFSFTLATCQG) is a signal peptide. 3 cysteine pairs are disulfide-bonded: C21–C72, C39–C64, and C62–C71.

Its subcellular location is the secreted. Functionally, shows an slight inhibitory effect toward the metalloproteinase brevilysin H6, but does not inhibit the metalloproteinases thermolysin, HR1A and HR1B. In Protobothrops flavoviridis (Habu), this protein is Small serum protein 3.